The chain runs to 451 residues: 3-carboxy-cis,cis-muconate cycloisomerase (451 aa).

The protein belongs to the class-II fumarase/aspartase family. As to quaternary structure, homotetramer.

The catalysed reaction is 2-(carboxymethyl)-5-oxo-2,5-dihydro-2-furoate = 3-carboxy-cis,cis-muconate + H(+). Its pathway is aromatic compound metabolism; beta-ketoadipate pathway; 5-oxo-4,5-dihydro-2-furylacetate from 3-carboxy-cis,cis-muconate: step 1/2. Its function is as follows. Catalyzes an anti cycloisomerization. In Acinetobacter baylyi (strain ATCC 33305 / BD413 / ADP1), this protein is 3-carboxy-cis,cis-muconate cycloisomerase (pcaB).